Here is a 466-residue protein sequence, read N- to C-terminus: Chromosomal replication initiator protein DnaA (466 aa).

The domain I, interacts with DnaA modulators stretch occupies residues 1-86; that stretch reads MSLSLWQQCL…EVGTKPVTQT (86 aa). The tract at residues 86-129 is domain II; the sequence is TLKTPVHNVVAPTQTTTAQPQRVAPAARSGWDNVPAPAEPTYRS. A domain III, AAA+ region region spans residues 130–346; sequence NVNVKHTFDN…GALNRVIANA (217 aa). Gly174, Gly176, Lys177, and Thr178 together coordinate ATP. The tract at residues 347–466 is domain IV, binds dsDNA; the sequence is NFTGRAITID…FSNLIRTLSS (120 aa).

This sequence belongs to the DnaA family. Oligomerizes as a right-handed, spiral filament on DNA at oriC.

The protein localises to the cytoplasm. Its function is as follows. Plays an essential role in the initiation and regulation of chromosomal replication. ATP-DnaA binds to the origin of replication (oriC) to initiate formation of the DNA replication initiation complex once per cell cycle. Binds the DnaA box (a 9 base pair repeat at the origin) and separates the double-stranded (ds)DNA. Forms a right-handed helical filament on oriC DNA; dsDNA binds to the exterior of the filament while single-stranded (ss)DNA is stabiized in the filament's interior. The ATP-DnaA-oriC complex binds and stabilizes one strand of the AT-rich DNA unwinding element (DUE), permitting loading of DNA polymerase. After initiation quickly degrades to an ADP-DnaA complex that is not apt for DNA replication. Binds acidic phospholipids. This is Chromosomal replication initiator protein DnaA from Salmonella enteritidis PT4 (strain P125109).